Consider the following 541-residue polypeptide: Chaperonin GroEL (541 aa).

Residues 29-32 (TLGP), 86-90 (DGTTT), Gly-413, 476-478 (NAA), and Asp-492 contribute to the ATP site.

The protein belongs to the chaperonin (HSP60) family. Forms a cylinder of 14 subunits composed of two heptameric rings stacked back-to-back. Interacts with the co-chaperonin GroES.

It is found in the cytoplasm. The catalysed reaction is ATP + H2O + a folded polypeptide = ADP + phosphate + an unfolded polypeptide.. Its function is as follows. Together with its co-chaperonin GroES, plays an essential role in assisting protein folding. The GroEL-GroES system forms a nano-cage that allows encapsulation of the non-native substrate proteins and provides a physical environment optimized to promote and accelerate protein folding. The sequence is that of Chaperonin GroEL from Enterococcus faecalis (strain ATCC 700802 / V583).